We begin with the raw amino-acid sequence, 209 residues long: Thiamine-phosphate synthase (209 aa).

4-amino-2-methyl-5-(diphosphooxymethyl)pyrimidine is bound by residues 36–40 and Asn-68; that span reads QYRDK. Residues Asp-69 and Asp-87 each coordinate Mg(2+). Thr-106 contributes to the 4-amino-2-methyl-5-(diphosphooxymethyl)pyrimidine binding site. 133–135 is a 2-[(2R,5Z)-2-carboxy-4-methylthiazol-5(2H)-ylidene]ethyl phosphate binding site; sequence SST. Lys-136 provides a ligand contact to 4-amino-2-methyl-5-(diphosphooxymethyl)pyrimidine. Residue Gly-163 participates in 2-[(2R,5Z)-2-carboxy-4-methylthiazol-5(2H)-ylidene]ethyl phosphate binding.

Belongs to the thiamine-phosphate synthase family. Mg(2+) serves as cofactor.

It catalyses the reaction 2-[(2R,5Z)-2-carboxy-4-methylthiazol-5(2H)-ylidene]ethyl phosphate + 4-amino-2-methyl-5-(diphosphooxymethyl)pyrimidine + 2 H(+) = thiamine phosphate + CO2 + diphosphate. The catalysed reaction is 2-(2-carboxy-4-methylthiazol-5-yl)ethyl phosphate + 4-amino-2-methyl-5-(diphosphooxymethyl)pyrimidine + 2 H(+) = thiamine phosphate + CO2 + diphosphate. The enzyme catalyses 4-methyl-5-(2-phosphooxyethyl)-thiazole + 4-amino-2-methyl-5-(diphosphooxymethyl)pyrimidine + H(+) = thiamine phosphate + diphosphate. Its pathway is cofactor biosynthesis; thiamine diphosphate biosynthesis; thiamine phosphate from 4-amino-2-methyl-5-diphosphomethylpyrimidine and 4-methyl-5-(2-phosphoethyl)-thiazole: step 1/1. In terms of biological role, condenses 4-methyl-5-(beta-hydroxyethyl)thiazole monophosphate (THZ-P) and 2-methyl-4-amino-5-hydroxymethyl pyrimidine pyrophosphate (HMP-PP) to form thiamine monophosphate (TMP). The chain is Thiamine-phosphate synthase from Pseudomonas aeruginosa (strain LESB58).